Here is a 428-residue protein sequence, read N- to C-terminus: Histidinol dehydrogenase homolog (428 aa).

Zn(2+)-binding residues include glutamine 250 and histidine 253. Residues glutamate 320 and histidine 321 each act as proton acceptor in the active site. Positions 354 and 413 each coordinate Zn(2+).

Belongs to the histidinol dehydrogenase family. Zn(2+) is required as a cofactor.

The polypeptide is Histidinol dehydrogenase homolog (Pelagibacter ubique (strain HTCC1062)).